A 272-amino-acid chain; its full sequence is HMP-PP phosphatase (272 aa).

Asp-8 (nucleophile) is an active-site residue. Asp-8, Asp-10, and Asp-212 together coordinate Mg(2+).

Belongs to the HAD-like hydrolase superfamily. Cof family. Mg(2+) serves as cofactor.

It catalyses the reaction 4-amino-2-methyl-5-(diphosphooxymethyl)pyrimidine + H2O = 4-amino-2-methyl-5-(phosphooxymethyl)pyrimidine + phosphate + H(+). Functionally, catalyzes the hydrolysis of 4-amino-2-methyl-5-hydroxymethylpyrimidine pyrophosphate (HMP-PP) to 4-amino-2-methyl-5-hydroxymethylpyrimidine phosphate (HMP-P). In Salmonella agona (strain SL483), this protein is HMP-PP phosphatase.